Here is a 204-residue protein sequence, read N- to C-terminus: Urease accessory protein UreG (204 aa).

15 to 22 is a GTP binding site; it reads GPVGSGKT.

The protein belongs to the SIMIBI class G3E GTPase family. UreG subfamily. As to quaternary structure, homodimer. UreD, UreF and UreG form a complex that acts as a GTP-hydrolysis-dependent molecular chaperone, activating the urease apoprotein by helping to assemble the nickel containing metallocenter of UreC. The UreE protein probably delivers the nickel.

It localises to the cytoplasm. In terms of biological role, facilitates the functional incorporation of the urease nickel metallocenter. This process requires GTP hydrolysis, probably effectuated by UreG. This is Urease accessory protein UreG from Methylobacterium sp. (strain 4-46).